Consider the following 364-residue polypeptide: Putative agmatine deiminase 1 (364 aa).

Cys-356 (amidino-cysteine intermediate) is an active-site residue.

This sequence belongs to the agmatine deiminase family.

The enzyme catalyses agmatine + H2O = N-carbamoylputrescine + NH4(+). The polypeptide is Putative agmatine deiminase 1 (Listeria monocytogenes serotype 4b (strain F2365)).